Here is a 448-residue protein sequence, read N- to C-terminus: Lipoamide acyltransferase component of branched-chain alpha-keto acid dehydrogenase complex, mitochondrial (448 aa).

Positions 30 to 105 (VVQFKLSDIG…RVGQALIDVE (76 aa)) constitute a Lipoyl-binding domain. The residue at position 71 (K71) is an N6-lipoyllysine. Disordered regions lie at residues 108-146 (GNVEEPEQPKKEAASSSPEAPKSSAPKAPESAHSEGKVL) and 191-211 (TSGSTNIRTTHQAPQPSSKSY). Residues 121-136 (ASSSPEAPKSSAPKAP) show a composition bias toward low complexity. Residues 146–183 (LATPAVRRIAIENKIKLAEVRGTGKDGRVLKEDVLKFL) form the Peripheral subunit-binding (PSBD) domain. Over residues 191–210 (TSGSTNIRTTHQAPQPSSKS) the composition is skewed to polar residues. CoA contacts are provided by R257, S272, D315, S365, N366, G390, and I392. Active-site residues include H418 and D422.

This sequence belongs to the 2-oxoacid dehydrogenase family. (R)-lipoate is required as a cofactor. In terms of tissue distribution, ubiquitously expressed.

It is found in the mitochondrion matrix. The protein resides in the cytoplasm. It localises to the cytosol. Its subcellular location is the cell projection. The protein localises to the dendrite. It is found in the cilium. It catalyses the reaction N(6)-[(R)-dihydrolipoyl]-L-lysyl-[protein] + 2-methylpropanoyl-CoA = N(6)-[(R)-S(8)-2-methylpropanoyldihydrolipoyl]-L-lysyl-[protein] + CoA. The branched-chain alpha-keto dehydrogenase complex catalyzes the overall conversion of alpha-keto acids to acyl-CoA and CO(2). It contains multiple copies of three enzymatic components: branched-chain alpha-keto acid decarboxylase (E1), lipoamide acyltransferase (E2) and lipoamide dehydrogenase (E3). Within this complex, the catalytic function of this enzyme is to accept, and to transfer to coenzyme A, acyl groups that are generated by the branched-chain alpha-keto acid decarboxylase component. Required for the catabolism of branched-chain amino acids and the subsequent synthesis of monomethyl branched-chain fatty acids, which are important for regulating postembryonic growth. The sequence is that of Lipoamide acyltransferase component of branched-chain alpha-keto acid dehydrogenase complex, mitochondrial from Caenorhabditis elegans.